A 397-amino-acid chain; its full sequence is DnaJ homolog subfamily A member 1 (397 aa).

Residues 6-68 (TYYDVLGVKP…KKRELYDKGG (63 aa)) enclose the J domain. Position 66 is an N6-acetyllysine (Lys66). Residue Ser83 is modified to Phosphoserine. Residues 121 to 205 (GATRKLALQK…CNGRKIVREK (85 aa)) form a CR-type zinc finger. Cys134, Cys137, Cys150, Cys153, Cys177, Cys180, Cys193, and Cys196 together coordinate Zn(2+). CXXCXGXG motif repeat units follow at residues 134 to 141 (CDKCEGRG), 150 to 157 (CPNCRGTG), 177 to 184 (CMECQGHG), and 193 to 200 (CKSCNGRK). At Ser335 the chain carries Phosphoserine. The tract at residues 352–397 (VEETDEMDQVELVDFDPNQERRRHYNGEAYEDDEHHPRGGVQCQTS) is disordered. The segment covering 353–365 (EETDEMDQVELVD) has biased composition (acidic residues). The residue at position 381 (Tyr381) is a Phosphotyrosine. At Cys394 the chain carries Cysteine methyl ester. Cys394 carries S-farnesyl cysteine lipidation. The propeptide at 395 to 397 (QTS) is removed in mature form.

In terms of assembly, identified in a complex with HSPA1B and BAX. Interacts with RNF207.

Its subcellular location is the membrane. It localises to the cytoplasm. It is found in the microsome. The protein localises to the mitochondrion. The protein resides in the nucleus. Its subcellular location is the perinuclear region. Functionally, co-chaperone for HSPA8/Hsc70. Plays a role in protein transport into mitochondria via its role as co-chaperone. Functions as co-chaperone for HSPA1B and negatively regulates the translocation of BAX from the cytosol to mitochondria in response to cellular stress, thereby protecting cells against apoptosis. Stimulates ATP hydrolysis, but not the folding of unfolded proteins mediated by HSPA1A (in vitro). Promotes apoptosis in response to cellular stress mediated by exposure to anisomycin or UV. This is DnaJ homolog subfamily A member 1 (DNAJA1) from Bos taurus (Bovine).